The chain runs to 193 residues: Ion-translocating oxidoreductase complex subunit A (193 aa).

6 helical membrane passes run 5 to 25 (LLLFIGTVLVNNFVLVKFLGL), 47 to 67 (FVITLASICAWLVNHLILLPL), 72 to 92 (LRTMAYILVIAVVVQFTEMVV), 102 to 122 (LLGIFLPLITTNCAVLGVPLL), 134 to 154 (AIYGFSASIGFSLVMVLFAGV), and 171 to 191 (SIALVTAGLMALAFMGFAGLV).

Belongs to the NqrDE/RnfAE family. In terms of assembly, the complex is composed of six subunits: RnfA, RnfB, RnfC, RnfD, RnfE and RnfG.

The protein localises to the cell inner membrane. Its function is as follows. Part of a membrane-bound complex that couples electron transfer with translocation of ions across the membrane. In Erwinia tasmaniensis (strain DSM 17950 / CFBP 7177 / CIP 109463 / NCPPB 4357 / Et1/99), this protein is Ion-translocating oxidoreductase complex subunit A.